A 194-amino-acid polypeptide reads, in one-letter code: Probable nicotinate-nucleotide adenylyltransferase (194 aa).

The protein belongs to the NadD family.

The enzyme catalyses nicotinate beta-D-ribonucleotide + ATP + H(+) = deamido-NAD(+) + diphosphate. It functions in the pathway cofactor biosynthesis; NAD(+) biosynthesis; deamido-NAD(+) from nicotinate D-ribonucleotide: step 1/1. Its function is as follows. Catalyzes the reversible adenylation of nicotinate mononucleotide (NaMN) to nicotinic acid adenine dinucleotide (NaAD). The polypeptide is Probable nicotinate-nucleotide adenylyltransferase (Brucella abortus (strain 2308)).